A 67-amino-acid polypeptide reads, in one-letter code: ATP synthase F(0) complex subunit 8 (67 aa).

A helical transmembrane segment spans residues 8-24; the sequence is PWFITILSMIITLFILF. At lysine 54 the chain carries N6-acetyllysine; alternate. Lysine 54 is modified (N6-succinyllysine; alternate). The residue at position 57 (lysine 57) is an N6-acetyllysine.

Belongs to the ATPase protein 8 family. As to quaternary structure, component of the ATP synthase complex composed at least of ATP5F1A/subunit alpha, ATP5F1B/subunit beta, ATP5MC1/subunit c (homooctomer), MT-ATP6/subunit a, MT-ATP8/subunit 8, ATP5ME/subunit e, ATP5MF/subunit f, ATP5MG/subunit g, ATP5MK/subunit k, ATP5MJ/subunit j, ATP5F1C/subunit gamma, ATP5F1D/subunit delta, ATP5F1E/subunit epsilon, ATP5PF/subunit F6, ATP5PB/subunit b, ATP5PD/subunit d, ATP5PO/subunit OSCP. ATP synthase complex consists of a soluble F(1) head domain (subunits alpha(3) and beta(3)) - the catalytic core - and a membrane F(0) domain - the membrane proton channel (subunits c, a, 8, e, f, g, k and j). These two domains are linked by a central stalk (subunits gamma, delta, and epsilon) rotating inside the F1 region and a stationary peripheral stalk (subunits F6, b, d, and OSCP). Interacts with PRICKLE3.

Its subcellular location is the mitochondrion membrane. Subunit 8, of the mitochondrial membrane ATP synthase complex (F(1)F(0) ATP synthase or Complex V) that produces ATP from ADP in the presence of a proton gradient across the membrane which is generated by electron transport complexes of the respiratory chain. ATP synthase complex consist of a soluble F(1) head domain - the catalytic core - and a membrane F(1) domain - the membrane proton channel. These two domains are linked by a central stalk rotating inside the F(1) region and a stationary peripheral stalk. During catalysis, ATP synthesis in the catalytic domain of F(1) is coupled via a rotary mechanism of the central stalk subunits to proton translocation. In vivo, can only synthesize ATP although its ATP hydrolase activity can be activated artificially in vitro. Part of the complex F(0) domain. This Orycteropus afer (Aardvark) protein is ATP synthase F(0) complex subunit 8.